The sequence spans 793 residues: ABC transporter G family member 1 (793 aa).

A compositionally biased stretch (low complexity) spans 1-20 (MDSNNNNNNENEAFSGASES). Positions 1–96 (MDSNNNNNNE…NNNQNNNIIN (96 aa)) are disordered. Residues 21–37 (SEFRKIVEENENEREFE) are compositionally biased toward basic and acidic residues. Residues 59-68 (ETINPNISLD) are compositionally biased toward polar residues. A coiled-coil region spans residues 67–102 (LDNNNNNNQNNQNNQNNNNNNNNQNNNIINNLNKKN). A compositionally biased stretch (low complexity) spans 69 to 96 (NNNNNNQNNQNNQNNNNNNNNQNNNIIN). An ABC transporter domain is found at 123 to 364 (VQITEKGKKK…FNANGYHCSE (242 aa)). Residue 156–163 (GPSGAGKT) participates in ATP binding. The span at 382–398 (DQADSDDDDYNDEEEEI) shows a compositional bias: acidic residues. Residues 382-457 (DQADSDDDDY…QSTDGRARRR (76 aa)) form a disordered region. Gly residues predominate over residues 399-413 (GGGGGGSGGGAGGIE). Residues 421–437 (PTMNGSAVDNIKNNELK) are compositionally biased toward polar residues. The span at 438-448 (QQQQQQQQQQQ) shows a compositional bias: low complexity. The ABC transmembrane type-2 domain maps to 527–785 (MAFKVNLIQA…VLTFLVLKLK (259 aa)). 7 consecutive transmembrane segments (helical) span residues 533-553 (LIQAIFQGLLCGIVYYQLGLG), 563-583 (VVAFIIMGVSFPAVMSTIHVF), 610-630 (FMDACIAVLLPMVTATIVYWM), 647-667 (FVLMLVLASQTCLSLGVLISS), 674-694 (VGTAVAPLIVILFFLFSGFFI), 701-721 (GWLVWFPYISFFRYMIEAAVI), and 764-784 (VWILVLYIIGFRVLTFLVLKL).

This sequence belongs to the ABC transporter superfamily. ABCG family.

It localises to the membrane. The protein is ABC transporter G family member 1 (abcG1) of Dictyostelium discoideum (Social amoeba).